The chain runs to 280 residues: Threonylcarbamoyl-AMP synthase (280 aa).

Residues 1-56 (MSTARPCAGLRAAVAAGMGLSDGPAGSSRGCRLLRPPAPAPALPGARLLRLPESEA) constitute a mitochondrion transit peptide. Position 61 is a phosphoserine (Ser61). The YrdC-like domain maps to 68-258 (TEALRAAVAE…KFGIIRSGCA (191 aa)).

Belongs to the SUA5 family. Interacts with RSC1A1.

The protein localises to the cytoplasm. It localises to the mitochondrion. The protein resides in the cell membrane. It carries out the reaction L-threonine + hydrogencarbonate + ATP = L-threonylcarbamoyladenylate + diphosphate + H2O. Its function is as follows. Cytoplasmic and mitochondrial threonylcarbamoyl-AMP synthase required for the formation of a threonylcarbamoyl group on adenosine at position 37 (t(6)A37) in tRNAs that read codons beginning with adenine. Catalyzes the conversion of L-threonine, HCO(3)(-)/CO(2) and ATP to give threonylcarbamoyl-AMP (TC-AMP) as the acyladenylate intermediate, with the release of diphosphate. Participates in t(6)A37 formation in cytoplasmic and mitochondrial tRNAs. May regulate the activity of some transporters. The chain is Threonylcarbamoyl-AMP synthase from Rattus norvegicus (Rat).